A 468-amino-acid chain; its full sequence is Peroxisome proliferator-activated receptor alpha (468 aa).

The nuclear receptor DNA-binding region spans 99 to 173; it reads NIECRICGDK…VGMSHNAIRF (75 aa). 2 consecutive NR C4-type zinc fingers follow at residues 102-122 and 139-161; these read CRIC…CEGC and CDRS…FHKC. An NR LBD domain is found at 239-466; that stretch reads FVIHDMETLC…HPLLQEIYRD (228 aa). Indeglitazar contacts are provided by serine 280, tyrosine 314, and tyrosine 464. Positions 304–433 are required for heterodimerization with RXRA; sequence DQVTLLKYGV…PKLLQKMADL (130 aa).

It belongs to the nuclear hormone receptor family. NR1 subfamily. As to quaternary structure, heterodimer; with RXRA. This heterodimerization is required for DNA binding and transactivation activity. Interacts with NCOA3 coactivator. Interacts with CITED2; the interaction stimulates its transcriptional activity. Also interacts with PPARBP in vitro. Interacts with AKAP13, LPIN1, PRDM16 and coactivator NCOA6. Interacts with ASXL1 and ASXL2. Interacts with PER2. Interacts with SIRT1; the interaction seems to be modulated by NAD(+) levels. Interacts with CRY1 and CRY2. In hepatocytes, interacts with PAQR3 and HUWE1; the interactions promote PPARA poylubiquitination and HUWE1-mediated degradation. Ubiquitinated by E3 ubiquitin-protein ligase HUWE1; leading to proteasomal degradation. In terms of processing, phosphorylated. In terms of tissue distribution, skeletal muscle, liver, heart and kidney. Expressed in monocytes.

It is found in the nucleus. Functionally, ligand-activated transcription factor. Key regulator of lipid metabolism. Activated by the endogenous ligand 1-palmitoyl-2-oleoyl-sn-glycerol-3-phosphocholine (16:0/18:1-GPC). Activated by oleylethanolamide, a naturally occurring lipid that regulates satiety. Receptor for peroxisome proliferators such as hypolipidemic drugs and fatty acids. Regulates the peroxisomal beta-oxidation pathway of fatty acids. Functions as a transcription activator for the ACOX1 and P450 genes. Transactivation activity requires heterodimerization with RXRA and is antagonized by NR2C2. May be required for the propagation of clock information to metabolic pathways regulated by PER2. This chain is Peroxisome proliferator-activated receptor alpha (PPARA), found in Homo sapiens (Human).